Consider the following 182-residue polypeptide: A-type ATP synthase subunit E (182 aa).

The protein belongs to the V-ATPase E subunit family. Has multiple subunits with at least A(3), B(3), C, D, E, F, H, I and proteolipid K(x).

It localises to the cell membrane. Its function is as follows. Component of the A-type ATP synthase that produces ATP from ADP in the presence of a proton gradient across the membrane. The protein is A-type ATP synthase subunit E of Methanothrix thermoacetophila (strain DSM 6194 / JCM 14653 / NBRC 101360 / PT) (Methanosaeta thermophila).